The following is a 95-amino-acid chain: Integration host factor subunit beta (95 aa).

It belongs to the bacterial histone-like protein family. As to quaternary structure, heterodimer of an alpha and a beta chain.

In terms of biological role, this protein is one of the two subunits of integration host factor, a specific DNA-binding protein that functions in genetic recombination as well as in transcriptional and translational control. This chain is Integration host factor subunit beta, found in Shewanella pealeana (strain ATCC 700345 / ANG-SQ1).